Consider the following 447-residue polypeptide: Phosphoglucosamine mutase (447 aa).

The Phosphoserine intermediate role is filled by S107. Mg(2+)-binding residues include S107, D246, D248, and D250. A Phosphoserine modification is found at S107.

The protein belongs to the phosphohexose mutase family. The cofactor is Mg(2+). Post-translationally, activated by phosphorylation.

It catalyses the reaction alpha-D-glucosamine 1-phosphate = D-glucosamine 6-phosphate. In terms of biological role, catalyzes the conversion of glucosamine-6-phosphate to glucosamine-1-phosphate. The sequence is that of Phosphoglucosamine mutase from Ralstonia pickettii (strain 12J).